Consider the following 190-residue polypeptide: uncharacterized protein (190 aa).

A helical membrane pass occupies residues 12–34; the sequence is LLGLSIFLTTFLFVANFLPGIFA.

It localises to the membrane. This is an uncharacterized protein from Archaeoglobus fulgidus (strain ATCC 49558 / DSM 4304 / JCM 9628 / NBRC 100126 / VC-16).